A 532-amino-acid chain; its full sequence is Probable cytochrome P450 524A1 (532 aa).

A helical transmembrane segment spans residues 8 to 28; that stretch reads FIIFILLAALAVFVSEATSKV. A heme-binding site is contributed by Cys-478.

This sequence belongs to the cytochrome P450 family. The cofactor is heme.

It is found in the membrane. This is Probable cytochrome P450 524A1 (cyp524A1) from Dictyostelium discoideum (Social amoeba).